The primary structure comprises 183 residues: Negative modulator of initiation of replication (183 aa).

Positions 43–70 (VNDTQPVSAPAPSKAAPSAGNESRPQDR) are disordered. Positions 50 to 61 (SAPAPSKAAPSA) are enriched in low complexity. Interaction with DNA stretches follow at residues 89-90 (AV), 118-122 (RTRIY), and 152-158 (NTNTGRK).

It belongs to the SeqA family. In terms of assembly, homodimer. Polymerizes to form helical filaments.

The protein localises to the cytoplasm. Functionally, negative regulator of replication initiation, which contributes to regulation of DNA replication and ensures that replication initiation occurs exactly once per chromosome per cell cycle. Binds to pairs of hemimethylated GATC sequences in the oriC region, thus preventing assembly of replication proteins and re-initiation at newly replicated origins. Repression is relieved when the region becomes fully methylated. This chain is Negative modulator of initiation of replication, found in Pantoea ananatis (strain AJ13355).